A 253-amino-acid polypeptide reads, in one-letter code: Small ribosomal subunit protein uS3 (253 aa).

Residues 39 to 107 enclose the KH type-2 domain; sequence VRRALKKRLY…EVHLNIVEIR (69 aa). Residues 215-253 are disordered; the sequence is LDKRLAGESGPAGEGGGRERGDRPDRGPRRERRGEPSNA. Basic and acidic residues predominate over residues 230–253; the sequence is GGRERGDRPDRGPRRERRGEPSNA.

The protein belongs to the universal ribosomal protein uS3 family. As to quaternary structure, part of the 30S ribosomal subunit. Forms a tight complex with proteins S10 and S14.

Binds the lower part of the 30S subunit head. Binds mRNA in the 70S ribosome, positioning it for translation. The protein is Small ribosomal subunit protein uS3 of Phenylobacterium zucineum (strain HLK1).